The following is a 483-amino-acid chain: 6-phosphogluconate dehydrogenase, decarboxylating (483 aa).

NADP(+) contacts are provided by residues 10–15 (GLAVMG) and 33–35 (NRT). Lysine 38 carries the post-translational modification N6-acetyllysine. Position 57 is a phosphoserine (serine 57). N6-acetyllysine is present on lysine 59. Residues 75-77 (VKA) and asparagine 103 each bind NADP(+). Residues asparagine 103 and 129–131 (SGG) each bind substrate. Phosphoserine is present on serine 129. Lysine 184 (proton acceptor) is an active-site residue. Position 187 to 188 (187 to 188 (HN)) interacts with substrate. The active-site Proton donor is the glutamate 191. Positions 192, 261, 288, 447, and 453 each coordinate substrate. Residue 478–481 (SSSY) participates in NADP(+) binding.

It belongs to the 6-phosphogluconate dehydrogenase family. In terms of assembly, homodimer.

Its subcellular location is the cytoplasm. The catalysed reaction is 6-phospho-D-gluconate + NADP(+) = D-ribulose 5-phosphate + CO2 + NADPH. It participates in carbohydrate degradation; pentose phosphate pathway; D-ribulose 5-phosphate from D-glucose 6-phosphate (oxidative stage): step 3/3. Functionally, catalyzes the oxidative decarboxylation of 6-phosphogluconate to ribulose 5-phosphate and CO(2), with concomitant reduction of NADP to NADPH. The protein is 6-phosphogluconate dehydrogenase, decarboxylating of Rattus norvegicus (Rat).